The primary structure comprises 71 residues: MVESALEPNITTKSVGQAIRAHLRVLKLTKKPSREEFLTIAKVAGAGILAVGAVGFIIYVLLTMLPQWVAK.

A helical transmembrane segment spans residues 43-63; sequence VAGAGILAVGAVGFIIYVLLT.

Belongs to the SecE/SEC61-gamma family. As to quaternary structure, component of the Sec protein translocase complex. Heterotrimer consisting of SecY (alpha), SecG (beta) and SecE (gamma) subunits. The heterotrimers can form oligomers, although 1 heterotrimer is thought to be able to translocate proteins. Interacts with the ribosome. May interact with SecDF, and other proteins may be involved.

It is found in the cell membrane. Functionally, essential subunit of the Sec protein translocation channel SecYEG. Clamps together the 2 halves of SecY. May contact the channel plug during translocation. The sequence is that of Protein translocase subunit SecE from Methanosarcina mazei (strain ATCC BAA-159 / DSM 3647 / Goe1 / Go1 / JCM 11833 / OCM 88) (Methanosarcina frisia).